The following is a 504-amino-acid chain: DnaJ homolog subfamily C member 3 (504 aa).

A signal peptide spans 1 to 31; the sequence is MVAPGSVGSRLGAVFPFLLVLVDLQYEGAEC. TPR repeat units lie at residues 37–70, 72–104, 105–138, 154–187, 188–221, 222–255, 268–301, 306–339, and 340–373; these read VEKHLELGKKLLAAGQLADALSQFHAAVDGDPDN, IAYYRRATVFLAMGKSKAALPDLTKVIALKMDF, TAARLQRGHLLLKQGKLDEAEDDFKKVLKSNPSE, MQRLRSQALDAFDGADYTAAITFLDKILEVCVWD, AELRELRAECFIKEGEPRKAISDLKAASKLKSDN, TEAFYKISTLYYQLGDHELSLSEVRECLKLDQDH, LNKLIESAEELIRDGRYTDATSKYESVMKTEPSV, VRSKERICHCFSKDEKPVEAIRICSEVLQMEPDN, and VNALKDRAEAYLIEEMYDEAIQDYEAAQEHNEND. Cysteine 248 and cysteine 258 form a disulfide bridge. The residue at position 274 (serine 274) is a Phosphoserine. Cysteine 313 and cysteine 329 are joined by a disulfide. Residues 375–393 are flexible linker; that stretch reads QIREGLEKAQRLLKQSQKR. Residues 394 to 462 enclose the J domain; the sequence is DYYKILGVKR…EMRKKFDDGE (69 aa). A disordered region spans residues 451 to 481; it reads DPEMRKKFDDGEDPLDAESQQGGGGNPFHRS.

In terms of assembly, interacts with EIF2AK4/GCN2; this interaction occurs under endoplasmic reticulum (ER) stress, hypothermic and amino acid starving stress conditions and inhibits EIF2AK4/GCN2 kinase activity. Interacts with EIF2AK3. Interacts with EIF2AK2. Forms a trimeric complex with DNAJB1 and HSPA8. Interacts with THAP12. In terms of tissue distribution, widely expressed, with high level in the liver.

The protein localises to the endoplasmic reticulum. Involved in the unfolded protein response (UPR) during endoplasmic reticulum (ER) stress. Acts as a negative regulator of the EIF2AK4/GCN2 kinase activity by preventing the phosphorylation of eIF-2-alpha at 'Ser-52' and hence attenuating general protein synthesis under ER stress, hypothermic and amino acid starving stress conditions. Co-chaperone of HSPA8/HSC70, it stimulates its ATPase activity. May inhibit both the autophosphorylation of EIF2AK2/PKR and the ability of EIF2AK2 to catalyze phosphorylation of the EIF2A. May inhibit EIF2AK3/PERK activity. The sequence is that of DnaJ homolog subfamily C member 3 (Dnajc3) from Mus musculus (Mouse).